Reading from the N-terminus, the 1349-residue chain is Aldehyde oxidase 2 (1349 aa).

The region spanning 8–96 is the 2Fe-2S ferredoxin-type domain; sequence DELVFFVNGR…GAAVTTVEGV (89 aa). 4 residues coordinate [2Fe-2S] cluster: cysteine 47, cysteine 52, cysteine 55, and cysteine 78. Glutamine 117 serves as a coordination point for Mo-molybdopterin. Residues cysteine 118, cysteine 121, cysteine 153, and cysteine 155 each coordinate [2Fe-2S] cluster. Cysteine 155 lines the Mo-molybdopterin pocket. The region spanning 240–425 is the FAD-binding PCMH-type domain; that stretch reads FYGERVTWIS…ESVHIPHSQK (186 aa). FAD contacts are provided by residues 268–275, alanine 349, serine 358, histidine 362, aspartate 371, and leucine 415; that span reads LVVGNTSL. Residues 816-817, 1098-1101, glutamine 1213, and leucine 1278 each bind Mo-molybdopterin; these read GF and ASVG. Glutamate 1280 functions as the Proton acceptor; for azaheterocycle hydroxylase activity in the catalytic mechanism.

Belongs to the xanthine dehydrogenase family. In terms of assembly, homodimer. Requires [2Fe-2S] cluster as cofactor. FAD serves as cofactor. Mo-molybdopterin is required as a cofactor. As to expression, only detected at very few levels in nasal mucosa.

It is found in the cytoplasm. It carries out the reaction an aldehyde + O2 + H2O = a carboxylate + H2O2 + H(+). Functionally, oxidase with broad substrate specificity, oxidizing aromatic azaheterocycles, such as phthalazine, as well as aldehydes, such as benzaldehyde and retinal. The protein is Aldehyde oxidase 2 (AOX2) of Macaca fascicularis (Crab-eating macaque).